The following is a 682-amino-acid chain: DNA ligase (682 aa).

Residues 42–46 (DAAYD), 88–89 (SL), and E121 contribute to the NAD(+) site. The active-site N6-AMP-lysine intermediate is the K123. NAD(+)-binding residues include R144, E180, K291, and K315. Zn(2+)-binding residues include C409, C412, C427, and C433. The region spanning 601 to 682 (AAGGALAGKT…FRSLAGLPPG (82 aa)) is the BRCT domain.

Belongs to the NAD-dependent DNA ligase family. LigA subfamily. Mg(2+) serves as cofactor. The cofactor is Mn(2+).

The enzyme catalyses NAD(+) + (deoxyribonucleotide)n-3'-hydroxyl + 5'-phospho-(deoxyribonucleotide)m = (deoxyribonucleotide)n+m + AMP + beta-nicotinamide D-nucleotide.. Functionally, DNA ligase that catalyzes the formation of phosphodiester linkages between 5'-phosphoryl and 3'-hydroxyl groups in double-stranded DNA using NAD as a coenzyme and as the energy source for the reaction. It is essential for DNA replication and repair of damaged DNA. The polypeptide is DNA ligase (Acidiphilium cryptum (strain JF-5)).